Consider the following 267-residue polypeptide: Undecaprenyl-diphosphatase (267 aa).

A run of 8 helical transmembrane segments spans residues 1–21 (MSYF…FLPI), 39–59 (QGLA…VIYF), 83–103 (AKLA…GLLM), 111–131 (LRSA…LWWV), 144–164 (AGWK…IPGT), 189–209 (FLMS…KLVT), 218–238 (TLLT…HFFL), and 246–266 (MTPF…FLMM).

This sequence belongs to the UppP family.

The protein resides in the cell inner membrane. It carries out the reaction di-trans,octa-cis-undecaprenyl diphosphate + H2O = di-trans,octa-cis-undecaprenyl phosphate + phosphate + H(+). Its function is as follows. Catalyzes the dephosphorylation of undecaprenyl diphosphate (UPP). Confers resistance to bacitracin. The sequence is that of Undecaprenyl-diphosphatase from Vibrio atlanticus (strain LGP32) (Vibrio splendidus (strain Mel32)).